The chain runs to 181 residues: ATP synthase subunit delta (181 aa).

It belongs to the ATPase delta chain family. As to quaternary structure, F-type ATPases have 2 components, F(1) - the catalytic core - and F(0) - the membrane proton channel. F(1) has five subunits: alpha(3), beta(3), gamma(1), delta(1), epsilon(1). F(0) has three main subunits: a(1), b(2) and c(10-14). The alpha and beta chains form an alternating ring which encloses part of the gamma chain. F(1) is attached to F(0) by a central stalk formed by the gamma and epsilon chains, while a peripheral stalk is formed by the delta and b chains.

It localises to the cell inner membrane. Its function is as follows. F(1)F(0) ATP synthase produces ATP from ADP in the presence of a proton or sodium gradient. F-type ATPases consist of two structural domains, F(1) containing the extramembraneous catalytic core and F(0) containing the membrane proton channel, linked together by a central stalk and a peripheral stalk. During catalysis, ATP synthesis in the catalytic domain of F(1) is coupled via a rotary mechanism of the central stalk subunits to proton translocation. Functionally, this protein is part of the stalk that links CF(0) to CF(1). It either transmits conformational changes from CF(0) to CF(1) or is implicated in proton conduction. This Orientia tsutsugamushi (strain Boryong) (Rickettsia tsutsugamushi) protein is ATP synthase subunit delta.